The following is a 246-amino-acid chain: Small ribosomal subunit protein uS2 (246 aa).

It belongs to the universal ribosomal protein uS2 family.

This is Small ribosomal subunit protein uS2 from Pseudomonas aeruginosa (strain LESB58).